We begin with the raw amino-acid sequence, 124 residues long: MPTINQLIRKGRLGLTHKKKVPALGKSNPQRRGVCTKVYTTTPRKPNSALRKVARVKISGYGEVTAYIPGEGHNLQEHSVVLIRGGRVKDLPGVRYHIIRGALDLRGVQNRKKARSKYGVKKSG.

The residue at position 90 (aspartate 90) is a 3-methylthioaspartic acid.

Belongs to the universal ribosomal protein uS12 family. In terms of assembly, part of the 30S ribosomal subunit. Contacts proteins S8 and S17. May interact with IF1 in the 30S initiation complex.

With S4 and S5 plays an important role in translational accuracy. Its function is as follows. Interacts with and stabilizes bases of the 16S rRNA that are involved in tRNA selection in the A site and with the mRNA backbone. Located at the interface of the 30S and 50S subunits, it traverses the body of the 30S subunit contacting proteins on the other side and probably holding the rRNA structure together. The combined cluster of proteins S8, S12 and S17 appears to hold together the shoulder and platform of the 30S subunit. This is Small ribosomal subunit protein uS12 from Wolbachia sp. subsp. Drosophila simulans (strain wRi).